The primary structure comprises 563 residues: Endoglucanase B (563 aa).

The segment at residues 1–27 (MKKFLVLLIALIMIATLLVVPGVQTSA) is a signal peptide (or 31). Catalysis depends on E204, which acts as the Proton donor. The Nucleophile role is filled by E363. The tract at residues 476–495 (SVTPSPSATPSPTTITAPPT) is disordered. The Dockerin domain occupies 496–562 (DTVTYGDVNG…VLRSISELPY (67 aa)).

It belongs to the glycosyl hydrolase 5 (cellulase A) family.

It carries out the reaction Endohydrolysis of (1-&gt;4)-beta-D-glucosidic linkages in cellulose, lichenin and cereal beta-D-glucans.. This enzyme catalyzes the endohydrolysis of 1,4-beta-glucosidic linkages in cellulose, lichenin and cereal beta-D-glucans. This chain is Endoglucanase B (celB), found in Acetivibrio thermocellus (strain ATCC 27405 / DSM 1237 / JCM 9322 / NBRC 103400 / NCIMB 10682 / NRRL B-4536 / VPI 7372) (Clostridium thermocellum).